Here is a 354-residue protein sequence, read N- to C-terminus: Heme A synthase (354 aa).

The next 8 membrane-spanning stretches (helical) occupy residues 21-41 (VAVW…LGGL), 106-126 (VWGR…ALSG), 139-159 (VFLL…SGLV), 171-191 (AHLA…LDIL), 212-232 (MLGL…VAGL), 268-288 (VQFG…VGWF), 304-324 (AVGL…VMVV), and 326-346 (VWLA…CLWA). Histidine 272 is a binding site for heme. Histidine 332 lines the heme pocket.

The protein belongs to the COX15/CtaA family. Type 2 subfamily. In terms of assembly, interacts with CtaB. It depends on heme b as a cofactor.

It localises to the cell membrane. The catalysed reaction is Fe(II)-heme o + 2 A + H2O = Fe(II)-heme a + 2 AH2. It functions in the pathway porphyrin-containing compound metabolism; heme A biosynthesis; heme A from heme O: step 1/1. Its function is as follows. Catalyzes the conversion of heme O to heme A by two successive hydroxylations of the methyl group at C8. The first hydroxylation forms heme I, the second hydroxylation results in an unstable dihydroxymethyl group, which spontaneously dehydrates, resulting in the formyl group of heme A. This Paramagnetospirillum magneticum (strain ATCC 700264 / AMB-1) (Magnetospirillum magneticum) protein is Heme A synthase.